Here is a 976-residue protein sequence, read N- to C-terminus: Protein phosphatase 1 regulatory subunit 12B (976 aa).

Basic and acidic residues predominate over residues 1 to 24 (MAELEHLGGKRAESARARRAEQLR). Residues 1–52 (MAELEHLGGKRAESARARRAEQLRRWRGSLTEQEPAERQGAGRQLQTRRGSP) form a disordered region. Position 29 is a phosphoserine (Ser29). ANK repeat units follow at residues 57-86 (EDGA…DINT), 90-119 (DGLT…NVNQ), 123-152 (EGWT…SVGI), 216-245 (SGAT…ELNV), and 249-278 (DGWT…DMDI). A disordered region spans residues 342–489 (EEIPKSQDTE…LDDKDKEREN (148 aa)). Over residues 362-374 (SEEEEGEDEVSES) the composition is skewed to acidic residues. The span at 375 to 385 (ETEKEADKKPE) shows a compositional bias: basic and acidic residues. The span at 411–423 (FSASSARRLSSLF) shows a compositional bias: low complexity. Residue Thr444 is modified to Phosphothreonine. Residues 465–477 (SSIYRSSSSPRIS) are compositionally biased toward low complexity. The span at 480–489 (LDDKDKEREN) shows a compositional bias: basic and acidic residues. Ser502 is modified (phosphoserine). The disordered stretch occupies residues 503–873 (STSDIEEKEN…LTSRVEEDSN (371 aa)). Polar residues predominate over residues 538-564 (ETPQTIAPSTYTSTYLKRTPYKSQADS). Basic and acidic residues predominate over residues 622–631 (VRDEEAESLR). The span at 632 to 642 (KARSRQARQTR) shows a compositional bias: basic residues. Thr645 is subject to Phosphothreonine. Residues 655-679 (EAEKTFSRSRAERQAQEQPGEKLED) are compositionally biased toward basic and acidic residues. Polar residues-rich tracts occupy residues 722–739 (DKPT…SLYT) and 747–763 (SRAS…STHA). The span at 765–777 (AAKEMDTSEKGEA) shows a compositional bias: basic and acidic residues. A compositionally biased stretch (basic residues) spans 791–801 (ERRRAKDRRRG). Thr802 carries the post-translational modification Phosphothreonine. The segment covering 818-830 (EEVKEALHERLSR) has biased composition (basic and acidic residues). Ser833 is modified (phosphoserine). Positions 844 to 860 (YSDRASARARREAREAR) are enriched in basic and acidic residues. At Ser941 the chain carries Phosphoserine.

PP1 comprises a catalytic subunit, PPP1CA, PPP1CB or PPP1CC, and one or several targeting or regulatory subunits. PPP1R12B mediates binding to myosin. Isoform 3 and isoform 4 bind PPP1R12A, but not isoform 1 of PPP1R12B itself. Binds IL16.

Its subcellular location is the cytoplasm. The protein localises to the cytoskeleton. It is found in the stress fiber. Its function is as follows. Regulates myosin phosphatase activity. Augments Ca(2+) sensitivity of the contractile apparatus. In Mus musculus (Mouse), this protein is Protein phosphatase 1 regulatory subunit 12B (Ppp1r12b).